The following is a 1023-amino-acid chain: Presequence protease, mitochondrial (1023 aa).

The N-terminal 62 residues, 1–62 (MFRQSKTIIT…PDLFLTAVKL (62 aa)), are a transit peptide targeting the mitochondrion. His-99 serves as a coordination point for Zn(2+). Residue Glu-102 is the Proton acceptor of the active site. His-103 and Glu-200 together coordinate Zn(2+). The cysteines at positions 114 and 551 are disulfide-linked.

This sequence belongs to the peptidase M16 family. PreP subfamily. In terms of assembly, monomer and homodimer; homodimerization is induced by binding of the substrate. Zn(2+) serves as cofactor. Post-translationally, a disulfide bond locks the enzyme in the closed conformation preventing substrate entry into the catalytic chamber.

It is found in the mitochondrion matrix. Its activity is regulated as follows. Mainly exists in a closed and catalytically competent conformation but a closed-to-open switch allows substrate entry into the catalytic chamber. Substrate binding induces closure and dimerization. A disulfide bond may lock the enzyme in a closed conformation preventing substrate entry into the catalytic chamber, participating in redox regulation of the enzyme. Inhibited by metal-chelating agents. Inhibited by nickel and zinc excess, and slightly activated by manganese. Its function is as follows. Metalloendopeptidase of the mitochondrial matrix that functions in peptide cleavage and degradation rather than in protein processing. Has an ATP-independent activity. Specifically cleaves peptides in the range of 5 to 65 residues. Shows a preference for cleavage after small polar residues and before basic residues, but without any positional preference. Degrades the transit peptides of mitochondrial proteins after their cleavage. Also degrades other unstructured peptides. This is Presequence protease, mitochondrial (pitrm1) from Danio rerio (Zebrafish).